The sequence spans 634 residues: DNA-directed RNA polymerase subunit gamma (634 aa).

Residues Cys74, Cys76, Cys89, and Cys92 each coordinate Zn(2+). Mg(2+) contacts are provided by Asp471, Asp473, and Asp475.

Belongs to the RNA polymerase beta' chain family. RpoC1 subfamily. As to quaternary structure, in cyanobacteria the RNAP catalytic core is composed of 2 alpha, 1 beta, 1 beta', 1 gamma and 1 omega subunit. When a sigma factor is associated with the core the holoenzyme is formed, which can initiate transcription. Requires Mg(2+) as cofactor. Zn(2+) is required as a cofactor.

It carries out the reaction RNA(n) + a ribonucleoside 5'-triphosphate = RNA(n+1) + diphosphate. DNA-dependent RNA polymerase catalyzes the transcription of DNA into RNA using the four ribonucleoside triphosphates as substrates. This is DNA-directed RNA polymerase subunit gamma from Prochlorococcus marinus (strain MIT 9312).